The following is a 286-amino-acid chain: Formamidopyrimidine-DNA glycosylase (286 aa).

The active-site Schiff-base intermediate with DNA is Pro-2. Glu-3 acts as the Proton donor in catalysis. The active-site Proton donor; for beta-elimination activity is Lys-61. Residues His-96, Arg-115, and Lys-161 each contribute to the DNA site. An FPG-type zinc finger spans residues 247–281; sequence EAYGREGEPCRRCGRAMRREAFMNRSSYFCPSCQR. The Proton donor; for delta-elimination activity role is filled by Arg-271.

The protein belongs to the FPG family. As to quaternary structure, monomer. It depends on Zn(2+) as a cofactor.

The enzyme catalyses Hydrolysis of DNA containing ring-opened 7-methylguanine residues, releasing 2,6-diamino-4-hydroxy-5-(N-methyl)formamidopyrimidine.. It catalyses the reaction 2'-deoxyribonucleotide-(2'-deoxyribose 5'-phosphate)-2'-deoxyribonucleotide-DNA = a 3'-end 2'-deoxyribonucleotide-(2,3-dehydro-2,3-deoxyribose 5'-phosphate)-DNA + a 5'-end 5'-phospho-2'-deoxyribonucleoside-DNA + H(+). Involved in base excision repair of DNA damaged by oxidation or by mutagenic agents. Acts as a DNA glycosylase that recognizes and removes damaged bases. Has a preference for oxidized purines, such as 7,8-dihydro-8-oxoguanine (8-oxoG). Has AP (apurinic/apyrimidinic) lyase activity and introduces nicks in the DNA strand. Cleaves the DNA backbone by beta-delta elimination to generate a single-strand break at the site of the removed base with both 3'- and 5'-phosphates. This chain is Formamidopyrimidine-DNA glycosylase, found in Mycobacteroides abscessus (strain ATCC 19977 / DSM 44196 / CCUG 20993 / CIP 104536 / JCM 13569 / NCTC 13031 / TMC 1543 / L948) (Mycobacterium abscessus).